Here is a 362-residue protein sequence, read N- to C-terminus: Heat-inducible transcription repressor HrcA (362 aa).

Belongs to the HrcA family.

Functionally, negative regulator of class I heat shock genes (grpE-dnaK-dnaJ and groELS operons). Prevents heat-shock induction of these operons. The protein is Heat-inducible transcription repressor HrcA of Bradyrhizobium diazoefficiens (strain JCM 10833 / BCRC 13528 / IAM 13628 / NBRC 14792 / USDA 110).